A 369-amino-acid polypeptide reads, in one-letter code: DNA replication and repair protein RecF (369 aa).

30 to 37 (GDNAQGKT) contacts ATP.

Belongs to the RecF family.

The protein resides in the cytoplasm. Its function is as follows. The RecF protein is involved in DNA metabolism; it is required for DNA replication and normal SOS inducibility. RecF binds preferentially to single-stranded, linear DNA. It also seems to bind ATP. This is DNA replication and repair protein RecF from Streptococcus equi subsp. equi (strain 4047).